Consider the following 1074-residue polypeptide: BRD4-interacting chromatin-remodeling complex-associated protein-like (1074 aa).

Disordered stretches follow at residues 542–603 (AVSS…NTPG), 620–689 (TSPI…GQKR), 834–874 (TPLD…HDQF), and 887–952 (GNIS…SKLP). Composition is skewed to polar residues over residues 544-576 (SSAS…QANR), 591-603 (ASKS…NTPG), 620-629 (TSPIPTSKTT), and 660-680 (GATQ…TAVQ). Ser-621 is modified (phosphoserine). 3 stretches are compositionally biased toward basic and acidic residues: residues 889-904 (ISKK…KFDR), 913-925 (PPED…DPAK), and 934-948 (EGHR…HGSE). A Phosphoserine modification is found at Ser-976.

In terms of assembly, component of the multiprotein chromatin-remodeling complexes SWI/SNF: SWI/SNF-A (BAF), SWI/SNF-B (PBAF) and related complexes. The canonical complex contains a catalytic subunit (either SMARCA4/BRG1/BAF190A or SMARCA2/BRM/BAF190B) and at least SMARCE1, ACTL6A/BAF53, SMARCC1/BAF155, SMARCC2/BAF170, and SMARCB1/SNF5/BAF47. Other subunits specific to each of the complexes may also be present permitting several possible combinations developmentally and tissue specific. Component of the SWI/SNF (GBAF) subcomplex, which includes at least BICRA or BICRAL (mutually exclusive), BRD9, SS18, the core BAF subunits, SMARCA2/BRM, SMARCA4/BRG1/BAF190A, ACTL6A/BAF53, SMARCC1/BAF155, and SMARCD1/BAF60A.

Component of SWI/SNF chromatin remodeling subcomplex GBAF that carries out key enzymatic activities, changing chromatin structure by altering DNA-histone contacts within a nucleosome in an ATP-dependent manner. The polypeptide is BRD4-interacting chromatin-remodeling complex-associated protein-like (Mus musculus (Mouse)).